The sequence spans 215 residues: MTPFTQHTGLVAPLDRANVDTDQIIPKQFLKSIKRTGFGPNLFDEWRYLDIGEPGRDNSTRPLNQEFVLNFPRYQGASVLLARENFGCGSSREHAPWALDEYGFRAVIAPSFADIFYNNSFKNGLLPIVLAEAEMDALFEQCLGNEGYQLTVDLAAQRVRRPDGVEYAFEIDAFRKHCLLNGLDDIGLTLQDADAIGRFEQGHRAQQPWLFGALQ.

The protein belongs to the LeuD family. LeuD type 1 subfamily. In terms of assembly, heterodimer of LeuC and LeuD.

The enzyme catalyses (2R,3S)-3-isopropylmalate = (2S)-2-isopropylmalate. Its pathway is amino-acid biosynthesis; L-leucine biosynthesis; L-leucine from 3-methyl-2-oxobutanoate: step 2/4. In terms of biological role, catalyzes the isomerization between 2-isopropylmalate and 3-isopropylmalate, via the formation of 2-isopropylmaleate. This Xanthomonas campestris pv. campestris (strain 8004) protein is 3-isopropylmalate dehydratase small subunit.